The following is a 435-amino-acid chain: Ornithine decarboxylase (435 aa).

Residue Lys76 is modified to N6-(pyridoxal phosphate)lysine. Residues Ser207, Gly244, and 283-286 (EPGR) each bind pyridoxal 5'-phosphate. 339 to 340 (FD) provides a ligand contact to substrate. The active-site Proton donor; shared with dimeric partner is the Cys368. A substrate-binding site is contributed by Asp369. A pyridoxal 5'-phosphate-binding site is contributed by Tyr397.

It belongs to the Orn/Lys/Arg decarboxylase class-II family. In terms of assembly, homodimer. Only the dimer is catalytically active, as the active sites are constructed of residues from both monomers. It depends on pyridoxal 5'-phosphate as a cofactor.

The catalysed reaction is L-ornithine + H(+) = putrescine + CO2. Its pathway is amine and polyamine biosynthesis; putrescine biosynthesis via L-ornithine pathway; putrescine from L-ornithine: step 1/1. Its activity is regulated as follows. Inhibited by antizyme (AZ) in response to polyamine levels. AZ inhibits the assembly of the functional homodimer by binding to ODC monomers and targeting them for ubiquitin-independent proteolytic destruction by the 26S proteasome. In terms of biological role, catalyzes the first and rate-limiting step of polyamine biosynthesis that converts ornithine into putrescine, which is the precursor for the polyamines, spermidine and spermine. Polyamines are essential for cell proliferation and are implicated in cellular processes, ranging from DNA replication to apoptosis. In Panagrellus redivivus (Microworm), this protein is Ornithine decarboxylase (ODC).